A 162-amino-acid polypeptide reads, in one-letter code: Protein FAM167B (162 aa).

Belongs to the FAM167 (SEC) family.

The protein is Protein FAM167B (Fam167b) of Mus musculus (Mouse).